The primary structure comprises 245 residues: 1-(5-phosphoribosyl)-5-[(5-phosphoribosylamino)methylideneamino] imidazole-4-carboxamide isomerase (245 aa).

Aspartate 10 acts as the Proton acceptor in catalysis. Aspartate 135 serves as the catalytic Proton donor.

The protein belongs to the HisA/HisF family.

The protein resides in the cytoplasm. The catalysed reaction is 1-(5-phospho-beta-D-ribosyl)-5-[(5-phospho-beta-D-ribosylamino)methylideneamino]imidazole-4-carboxamide = 5-[(5-phospho-1-deoxy-D-ribulos-1-ylimino)methylamino]-1-(5-phospho-beta-D-ribosyl)imidazole-4-carboxamide. The protein operates within amino-acid biosynthesis; L-histidine biosynthesis; L-histidine from 5-phospho-alpha-D-ribose 1-diphosphate: step 4/9. The protein is 1-(5-phosphoribosyl)-5-[(5-phosphoribosylamino)methylideneamino] imidazole-4-carboxamide isomerase of Methanosarcina acetivorans (strain ATCC 35395 / DSM 2834 / JCM 12185 / C2A).